The chain runs to 296 residues: Ribosomal RNA small subunit methyltransferase A (296 aa).

Residues N31, L33, G58, E79, D111, and N136 each coordinate S-adenosyl-L-methionine.

It belongs to the class I-like SAM-binding methyltransferase superfamily. rRNA adenine N(6)-methyltransferase family. RsmA subfamily.

The protein localises to the cytoplasm. It catalyses the reaction adenosine(1518)/adenosine(1519) in 16S rRNA + 4 S-adenosyl-L-methionine = N(6)-dimethyladenosine(1518)/N(6)-dimethyladenosine(1519) in 16S rRNA + 4 S-adenosyl-L-homocysteine + 4 H(+). Specifically dimethylates two adjacent adenosines (A1518 and A1519) in the loop of a conserved hairpin near the 3'-end of 16S rRNA in the 30S particle. May play a critical role in biogenesis of 30S subunits. The protein is Ribosomal RNA small subunit methyltransferase A of Lactobacillus delbrueckii subsp. bulgaricus (strain ATCC BAA-365 / Lb-18).